A 30-amino-acid polypeptide reads, in one-letter code: GIPCGESCVFIPCISSVVGCSCKSKVCYRN.

The segment at residues 1–30 is a cross-link (cyclopeptide (Gly-Asn)); that stretch reads GIPCGESCVFIPCISSVVGCSCKSKVCYRN. Disulfide bonds link C4–C20, C8–C22, and C13–C27.

Belongs to the cyclotide family. Bracelet subfamily. In terms of processing, this is a cyclic peptide.

In terms of biological role, probably participates in a plant defense mechanism. This chain is Cyclotide vdif-A, found in Viola diffusa.